The primary structure comprises 230 residues: Lipoprotein-releasing system ATP-binding protein LolD (230 aa).

The region spanning 6–230 is the ABC transporter domain; that stretch reads LQVQAVSKSY…GYLQVPESAQ (225 aa). 42–49 serves as a coordination point for ATP; it reads GTSGSGKS.

This sequence belongs to the ABC transporter superfamily. Lipoprotein translocase (TC 3.A.1.125) family. As to quaternary structure, the complex is composed of two ATP-binding proteins (LolD) and two transmembrane proteins (LolC and LolE).

Its subcellular location is the cell inner membrane. Functionally, part of the ABC transporter complex LolCDE involved in the translocation of mature outer membrane-directed lipoproteins, from the inner membrane to the periplasmic chaperone, LolA. Responsible for the formation of the LolA-lipoprotein complex in an ATP-dependent manner. The polypeptide is Lipoprotein-releasing system ATP-binding protein LolD (Shewanella oneidensis (strain ATCC 700550 / JCM 31522 / CIP 106686 / LMG 19005 / NCIMB 14063 / MR-1)).